A 349-amino-acid chain; its full sequence is MAQVTLTAVRKVYPNGAEALEPSSFTIPDGELTVLVGPSGCGKSTLLRMVAGLEEITEGELSIGDRIVNDIDPADRNIAMVFQNYALYPHMSVAQNMGYGLKNRGMDKAAISEKVREAADMLNLNEFLDRRPSQLSGGQRQRVAMGRAIVREPDLFLFDEPLSNLDAKLRNQMRIEIRALQRRLGTTAMYVTHDQVEAMTMADRIIVLNSGMIEQIGTPNEIYEHPASTFVASFMGAPPMNLLRGEASGGAVTLGGGQDVPFARADGHDGPIQVGIRPEDTWPDPAGDLAFDVDIIEELGAQRLLHGHVAGQAFSVAVPKDKSAETGAMKLSVKPGAVHLFDADKGRRL.

The ABC transporter domain maps to 4–235 (VTLTAVRKVY…PASTFVASFM (232 aa)). ATP is bound at residue 37 to 44 (GPSGCGKS).

This sequence belongs to the ABC transporter superfamily. sn-glycerol-3-phosphate importer (TC 3.A.1.1.3) family. The complex is composed of two ATP-binding proteins (UgpC), two transmembrane proteins (UgpA and UgpE) and a solute-binding protein (UgpB).

It localises to the cell inner membrane. The enzyme catalyses sn-glycerol 3-phosphate(out) + ATP + H2O = sn-glycerol 3-phosphate(in) + ADP + phosphate + H(+). Functionally, part of the ABC transporter complex UgpBAEC involved in sn-glycerol-3-phosphate (G3P) import. Responsible for energy coupling to the transport system. In Jannaschia sp. (strain CCS1), this protein is sn-glycerol-3-phosphate import ATP-binding protein UgpC.